The following is a 315-amino-acid chain: Transaldolase (315 aa).

Catalysis depends on Lys-131, which acts as the Schiff-base intermediate with substrate.

The protein belongs to the transaldolase family. Type 1 subfamily. In terms of assembly, homodimer.

The protein localises to the cytoplasm. It catalyses the reaction D-sedoheptulose 7-phosphate + D-glyceraldehyde 3-phosphate = D-erythrose 4-phosphate + beta-D-fructose 6-phosphate. It functions in the pathway carbohydrate degradation; pentose phosphate pathway; D-glyceraldehyde 3-phosphate and beta-D-fructose 6-phosphate from D-ribose 5-phosphate and D-xylulose 5-phosphate (non-oxidative stage): step 2/3. In terms of biological role, transaldolase is important for the balance of metabolites in the pentose-phosphate pathway. In Actinobacillus pleuropneumoniae serotype 7 (strain AP76), this protein is Transaldolase.